A 589-amino-acid polypeptide reads, in one-letter code: Putative ABC transporter ATP-binding protein MG015 (589 aa).

6 helical membrane passes run 9–29 (LLYVFLCIVLGILYGIANPIL), 66–86 (LTIVSVTVFVAYALIFVFNVA), 161–181 (LIFLLSPVIALISLSILATLI), 251–271 (IFLFSWFGFISNITYLVSISI), 280–300 (IPSFGISVINYSFMLSYIASL), and 303–323 (ITLALDQIFTLWNLVQLGVVS). One can recognise an ABC transmembrane type-1 domain in the interval 9 to 319 (LLYVFLCIVL…IFTLWNLVQL (311 aa)). The region spanning 352–586 (IRFENVAFGY…NGFYARLKQS (235 aa)) is the ABC transporter domain. 385-392 (GPTGAGKS) contacts ATP.

It belongs to the ABC transporter superfamily.

The protein resides in the cell membrane. The sequence is that of Putative ABC transporter ATP-binding protein MG015 from Mycoplasma genitalium (strain ATCC 33530 / DSM 19775 / NCTC 10195 / G37) (Mycoplasmoides genitalium).